The sequence spans 156 residues: Small ribosomal subunit protein uS7 (156 aa).

This sequence belongs to the universal ribosomal protein uS7 family. In terms of assembly, part of the 30S ribosomal subunit. Contacts proteins S9 and S11.

One of the primary rRNA binding proteins, it binds directly to 16S rRNA where it nucleates assembly of the head domain of the 30S subunit. Is located at the subunit interface close to the decoding center, probably blocks exit of the E-site tRNA. The sequence is that of Small ribosomal subunit protein uS7 from Psychromonas ingrahamii (strain DSM 17664 / CCUG 51855 / 37).